Here is a 485-residue protein sequence, read N- to C-terminus: MNYEAVIGLEVHVQVKTASKMFTRVAAGYGHAPNTLTDPVVLALPGTLPVMNKAALDAIIKAGLLLGCEIAPVCKWDRKNYFYPDSPKNYQISQYDQPICLGGAVEIELPGSARNVMGEHKKIPLTRIHLEEDVGKLNHESVDSLVDYNRAGTPLMEIVSEPAIHSAEEAFAYLTSLRATMIYGGISDCDMEKGQLRCDANISVRPVGETKLGTKVELKNLNSISFVRDGIAHEIKRQLAVIERGGTIVQETRDYDGQTGTSQSLRSKEMAHDYRYFPDPDLMPVVVDQAWKARIQTTCPELPFDKQRRFFEQYRLPYTLTSVLVWDRELSDYFEETVKIAGADKAQTVGNWIVNDLLREIGTARVPLADAKVRPAHIAELVKLIDAGTILTNAAKEIFVEMFATGDTPAIIADRRGLKAAPTDSNELEQWCRDAIAANAKAVAEFKAGKDSAINAFKGPVMKAAKGKANPKLVDETLRRLLAAL.

The protein belongs to the GatB/GatE family. GatB subfamily. As to quaternary structure, heterotrimer of A, B and C subunits.

The enzyme catalyses L-glutamyl-tRNA(Gln) + L-glutamine + ATP + H2O = L-glutaminyl-tRNA(Gln) + L-glutamate + ADP + phosphate + H(+). The catalysed reaction is L-aspartyl-tRNA(Asn) + L-glutamine + ATP + H2O = L-asparaginyl-tRNA(Asn) + L-glutamate + ADP + phosphate + 2 H(+). Functionally, allows the formation of correctly charged Asn-tRNA(Asn) or Gln-tRNA(Gln) through the transamidation of misacylated Asp-tRNA(Asn) or Glu-tRNA(Gln) in organisms which lack either or both of asparaginyl-tRNA or glutaminyl-tRNA synthetases. The reaction takes place in the presence of glutamine and ATP through an activated phospho-Asp-tRNA(Asn) or phospho-Glu-tRNA(Gln). The protein is Aspartyl/glutamyl-tRNA(Asn/Gln) amidotransferase subunit B of Opitutus terrae (strain DSM 11246 / JCM 15787 / PB90-1).